A 117-amino-acid polypeptide reads, in one-letter code: Hydrogenase maturation factor HypA (117 aa).

His-2 contributes to the Ni(2+) binding site. Zn(2+)-binding residues include Cys-73, Cys-76, Cys-89, and Cys-92.

The protein belongs to the HypA/HybF family.

In terms of biological role, involved in the maturation of [NiFe] hydrogenases. Required for nickel insertion into the metal center of the hydrogenase. The sequence is that of Hydrogenase maturation factor HypA from Shewanella baltica (strain OS195).